Reading from the N-terminus, the 132-residue chain is CLAVATA3/ESR (CLE)-related protein TDIF (132 aa).

A signal peptide spans 1–26; that stretch reads MDIDLLWSFGGWFFILFPETINYCMA. Residues 42–62 traverse the membrane as a helical segment; the sequence is SCSSLFFVALLIITILITMLQ. The span at 68–77 shows a compositional bias: polar residues; it reads EVTSLPTHQP. The segment at 68 to 132 is disordered; sequence EVTSLPTHQP…PSGPNPISNR (65 aa). Residues 87 to 96 are compositionally biased toward low complexity; it reads STSSTATTTT. Residues 101 to 111 are compositionally biased toward basic residues; the sequence is KRTHHQSHPKP. Hydroxyproline occurs at positions 123 and 126. Proline 126 carries an O-linked (Ara...) hydroxyproline glycan.

The protein belongs to the CLV3/ESR signal peptide family. As to quaternary structure, interacts specifically with the leucine-rich repeat receptor-like protein kinase TDR. In terms of processing, the TDIFp peptide contains two hydroxprolines, but hydroxylation had no direct effect on TDIFp activity. Post-translationally, the O-glycosylation (arabinosylation) of the hydroxyproline Pro-126 enhances binding affinity of the TDIFp peptide for its receptor.

The protein resides in the secreted. The protein localises to the extracellular space. It is found in the cell membrane. Extracellular signal peptide that regulates cell fate. Represses tracheary element differentiation but promotes the formation of procambial cells adjacent to phloem cells in the veins. The polypeptide is CLAVATA3/ESR (CLE)-related protein TDIF (Zinnia elegans (Garden zinnia)).